Consider the following 382-residue polypeptide: Putative glutamate--cysteine ligase 2-1 (382 aa).

This sequence belongs to the glutamate--cysteine ligase type 2 family. YbdK subfamily.

The enzyme catalyses L-cysteine + L-glutamate + ATP = gamma-L-glutamyl-L-cysteine + ADP + phosphate + H(+). Functionally, ATP-dependent carboxylate-amine ligase which exhibits weak glutamate--cysteine ligase activity. The sequence is that of Putative glutamate--cysteine ligase 2-1 from Nocardioides sp. (strain ATCC BAA-499 / JS614).